A 106-amino-acid chain; its full sequence is Ferredoxin (106 aa).

C8 and C16 together coordinate [3Fe-4S] cluster. Positions 20, 39, 42, and 45 each coordinate [4Fe-4S] cluster. In terms of domain architecture, 4Fe-4S ferredoxin-type spans 30–59 (RMLYIHPDECVDCGACEPVCPVEAIYYEDD). C49 is a binding site for [3Fe-4S] cluster. Positions 81–106 (PGGASKVGQTDNDPQAIKDLPPQGED) are disordered.

The cofactor is [4Fe-4S] cluster. [3Fe-4S] cluster serves as cofactor.

Functionally, ferredoxins are iron-sulfur proteins that transfer electrons in a wide variety of metabolic reactions. This chain is Ferredoxin (fdxA), found in Mycolicibacterium smegmatis (Mycobacterium smegmatis).